The following is a 218-amino-acid chain: Glutathione S-transferase Mu 2 (218 aa).

In terms of domain architecture, GST N-terminal spans 2–88 (PIILGYWNIR…YIARKHNLCG (87 aa)). Residue 7–8 (YW) coordinates glutathione. Residues Ser-27 and Ser-44 each carry the phosphoserine modification. Glutathione contacts are provided by residues 43–46 (RSQW), Lys-50, 59–60 (NL), and 72–73 (QS). The 119-residue stretch at 90–208 (TEKEKIQEDI…KSSRFLPRPV (119 aa)) folds into the GST C-terminal domain. Tyr-116 serves as a coordination point for substrate.

This sequence belongs to the GST superfamily. Mu family. In terms of assembly, homodimer.

It localises to the cytoplasm. It carries out the reaction RX + glutathione = an S-substituted glutathione + a halide anion + H(+). It catalyses the reaction 11(S)-hydroxy-14(S),15(S)-epoxy-(5Z,8Z,12E)-eicosatrienoate + glutathione = (11S,15S)-dihydroxy-14(R)-S-glutathionyl-(5Z,8Z,12E)-eicosatrienoate. Functionally, conjugation of reduced glutathione to a wide number of exogenous and endogenous hydrophobic electrophiles. Participates in the formation of novel hepoxilin regioisomers. The sequence is that of Glutathione S-transferase Mu 2 (GSTM2) from Pongo abelii (Sumatran orangutan).